The following is a 183-amino-acid chain: MSAARESHPHGVKRSASPDDDLGSSNWEAADLGNEERKQKFLRLMGAGKKEHTGRLVIGDHKSTSHFRTGEEDKKINEELESQYQQSMDSKLSGRYRRHCGLGFSEVEDHDGEGDVAGDDDDDDDDSPDPESPDDSESDSESEKEESAEELQAAEHPDEVEDPKNKKDAKSNYKMMFVKSSGS.

The interval 1–183 (MSAARESHPH…KMMFVKSSGS (183 aa)) is disordered. Lys13 participates in a covalent cross-link: Glycyl lysine isopeptide (Lys-Gly) (interchain with G-Cter in SUMO2). A phosphoserine mark is found at Ser15 and Ser17. Over residues 48 to 78 (GKKEHTGRLVIGDHKSTSHFRTGEEDKKINE) the composition is skewed to basic and acidic residues. Lys62 is covalently cross-linked (Glycyl lysine isopeptide (Lys-Gly) (interchain with G-Cter in SUMO2)). Ser63 carries the phosphoserine modification. A Glycyl lysine isopeptide (Lys-Gly) (interchain with G-Cter in SUMO2) cross-link involves residue Lys75. Residues Ser87, Ser127, and Ser147 each carry the phosphoserine modification. A compositionally biased stretch (acidic residues) spans 106 to 149 (EVEDHDGEGDVAGDDDDDDDDSPDPESPDDSESDSESEKEESAE). Positions 153–171 (AAEHPDEVEDPKNKKDAKS) are enriched in basic and acidic residues. 2 positions are modified to N6-acetyllysine: Lys174 and Lys179.

This sequence belongs to the SMAP family.

In Homo sapiens (Human), this protein is Small acidic protein (SMAP).